We begin with the raw amino-acid sequence, 255 residues long: 5'-nucleotidase SurE (255 aa).

Residues Asp7, Asp8, Ser38, and Asn90 each coordinate a divalent metal cation.

Belongs to the SurE nucleotidase family. It depends on a divalent metal cation as a cofactor.

The protein resides in the cytoplasm. The catalysed reaction is a ribonucleoside 5'-phosphate + H2O = a ribonucleoside + phosphate. Its function is as follows. Nucleotidase that shows phosphatase activity on nucleoside 5'-monophosphates. The polypeptide is 5'-nucleotidase SurE (Picrophilus torridus (strain ATCC 700027 / DSM 9790 / JCM 10055 / NBRC 100828 / KAW 2/3)).